The primary structure comprises 80 residues: Iota-conotoxin-like r11c (80 aa).

A signal peptide spans 1-19 (MKLCLTFLLVLMILASVTG). The propeptide occupies 20–35 (EKSSKHTLSRAARVKN). 4-hydroxyproline; partial is present on residues P38 and P47. 4 cysteine pairs are disulfide-bonded: C41–C55, C48–C58, C54–C63, and C57–C72. At P65 the chain carries 4-hydroxyproline. The residue at position 78 (L78) is a D-leucine. Position 80 (R80) is a propeptide, removed by a carboxypeptidase.

The natural D-Leu form of the peptide is more potent than the synthetic L-Leu form. In terms of tissue distribution, expressed by the venom duct.

The protein localises to the secreted. Functionally, iota-conotoxins bind to voltage-gated sodium channels (Nav) and act as agonists by shifting the voltage-dependence of activation to more hyperpolarized levels. Causes circular motion, convulsions, copious urination, rigid paralysis and death upon intracranial injection into mice. Causes unbalanced swimming, swimming in diagonal and vertical motion and death, when injected intraperitoneally into goldfish. L-Leu and D-Leu forms are active on both nerve and muscle. The chain is Iota-conotoxin-like r11c from Conus radiatus (Rayed cone).